We begin with the raw amino-acid sequence, 1012 residues long: Structural polyprotein (1012 aa).

Residue Asp-30 participates in a divalent metal cation binding. The Peptidase S50 domain maps to 513–755 (ADKGYEVVAN…AGRQYHLAMA (243 aa)). The Nucleophile role is filled by Ser-652. Lys-692 is a catalytic residue. 2 disordered regions span residues 837-857 (GYGV…KDTR) and 968-1012 (TAME…EDLE). Residues 975-986 (RNPRRAPPKPKP) show a composition bias toward basic residues. The tract at residues 1003-1012 (IRTVSDEDLE) is interaction with VP1 protein.

Homotrimer. A central divalent metal stabilizes the VP2 trimer. Interacts with host ITGA4/ITGB1. In terms of assembly, homodimer. Interacts (via C-terminus) with VP1 in the cytoplasm. Interacts with VP2. In terms of processing, specific enzymatic cleavages yield mature proteins. The capsid assembly seems to be regulated by polyprotein processing. The protease VP4 cleaves itself off the polyprotein, thus releasing pre-VP2 and VP3 within the infected cell. During capsid assembly, the C-terminus of pre-VP2 is further processed by VP4, giving rise to VP2, the external capsid protein and three small peptides that all stay closely associated with the capsid.

It is found in the virion. Its subcellular location is the host cytoplasm. Capsid protein VP2 self assembles to form an icosahedral capsid with a T=13 symmetry, about 70 nm in diameter, and consisting of 260 VP2 trimers. The capsid encapsulates the genomic dsRNA. VP2 is also involved in attachment and entry into the host cell by interacting with host ITGA4/ITGB1. Its function is as follows. The precursor of VP2 plays an important role in capsid assembly. First, pre-VP2 and VP2 oligomers assemble to form a procapsid. Then, the pre-VP2 intermediates may be processed into VP2 proteins by proteolytic cleavage mediated by VP4 to obtain the mature virion. The final capsid is composed of pentamers and hexamers but VP2 has a natural tendency to assemble into all-pentameric structures. Therefore pre-VP2 may be required to allow formation of the hexameric structures. In terms of biological role, protease VP4 is a serine protease that cleaves the polyprotein into its final products. Pre-VP2 is first partially cleaved, and may be completely processed by VP4 upon capsid maturation. Functionally, capsid protein VP3 plays a key role in virion assembly by providing a scaffold for the capsid made of VP2. May self-assemble to form a T=4-like icosahedral inner-capsid composed of at least 180 trimers. Plays a role in genomic RNA packaging by recruiting VP1 into the capsid and interacting with the dsRNA genome segments to form a ribonucleoprotein complex. Additionally, the interaction of the VP3 C-terminal tail with VP1 removes the inherent structural blockade of the polymerase active site. Thus, VP3 can also function as a transcriptional activator. Structural peptide 1 is a small peptide derived from pre-VP2 C-terminus. It destabilizes and perforates cell membranes, suggesting a role during entry. Its function is as follows. Structural peptide 2 is a small peptide derived from pVP2 C-terminus. It is not essential for the virus viability, but viral growth is affected when missing. In terms of biological role, structural peptide 3 is a small peptide derived from pVP2 C-terminus. It is not essential for the virus viability, but viral growth is affected when missing. Functionally, structural peptide 4 is a small peptide derived from pVP2 C-terminus. It is essential for the virus viability. The sequence is that of Structural polyprotein from Gallus gallus (Chicken).